An 86-amino-acid chain; its full sequence is Neurotoxin 3FTx-RK (86 aa).

Residues 1–21 form the signal peptide; the sequence is MKTLLLTLVVVTIVCLELGYT. Intrachain disulfides connect Cys24-Cys45, Cys38-Cys63, Cys67-Cys78, and Cys79-Cys84.

In terms of tissue distribution, expressed by the venom gland.

It is found in the secreted. This Bungarus fasciatus (Banded krait) protein is Neurotoxin 3FTx-RK.